A 399-amino-acid polypeptide reads, in one-letter code: Enoyl-[acyl-carrier-protein] reductase [NADH] (399 aa).

NAD(+)-binding positions include 48–53 (GASTGY), 74–75 (FE), 111–112 (DA), and 139–140 (LA). A substrate-binding site is contributed by Tyr-225. Tyr-235 acts as the Proton donor in catalysis. Residues Lys-244 and 274-276 (VVT) contribute to the NAD(+) site.

This sequence belongs to the TER reductase family. Monomer.

The enzyme catalyses a 2,3-saturated acyl-[ACP] + NAD(+) = a (2E)-enoyl-[ACP] + NADH + H(+). Its pathway is lipid metabolism; fatty acid biosynthesis. Its function is as follows. Involved in the final reduction of the elongation cycle of fatty acid synthesis (FAS II). Catalyzes the reduction of a carbon-carbon double bond in an enoyl moiety that is covalently linked to an acyl carrier protein (ACP). This is Enoyl-[acyl-carrier-protein] reductase [NADH] from Yersinia pseudotuberculosis serotype O:1b (strain IP 31758).